Consider the following 392-residue polypeptide: MTAFPRTVMLLGSGELGKEVAIAAQRLGCRVIACDRYANAPAMQVADTAEVFQMTDATALKEVVQRHRPDVVIPEIEALAVEALAELEQDGITVIPTARATAFTMNRDQIRDLASGELGLHTARFAYASNAAELKKVAAPLGWPVVVKPVMSSSGKGQSVVQTPEQLDQAWEAAMANARGTSNQVIVEEFLEFDLEITLLTIRQRNGETLFCPPIGHEQERGDYQCSWQPAQMSDAQLQQAQTMARTVTDNLGGAGLFGVEFFLCGNEVIFSELSPRPHDTGLVTLISQNLSEFELHLRAVLNLPIPQLTTAPAAASRVILADRELKTVAYEGLEQALREAGTQVLLFGKPNARPNRRMGVALARGEDLSEVRAKADRAAACIQVLDGSARR.

N(1)-(5-phospho-beta-D-ribosyl)glycinamide-binding positions include 15–16 (EL) and Glu-75. ATP-binding positions include Arg-107, Lys-148, 153-158 (SSGKGQ), 188-191 (EEFL), and Glu-196. The ATP-grasp domain maps to 112–302 (DLASGELGLH…EFELHLRAVL (191 aa)). Residues Glu-261 and Glu-273 each coordinate Mg(2+). N(1)-(5-phospho-beta-D-ribosyl)glycinamide is bound by residues Asp-280, Lys-350, and 357-358 (RR).

The protein belongs to the PurK/PurT family. In terms of assembly, homodimer.

The catalysed reaction is N(1)-(5-phospho-beta-D-ribosyl)glycinamide + formate + ATP = N(2)-formyl-N(1)-(5-phospho-beta-D-ribosyl)glycinamide + ADP + phosphate + H(+). It functions in the pathway purine metabolism; IMP biosynthesis via de novo pathway; N(2)-formyl-N(1)-(5-phospho-D-ribosyl)glycinamide from N(1)-(5-phospho-D-ribosyl)glycinamide (formate route): step 1/1. In terms of biological role, involved in the de novo purine biosynthesis. Catalyzes the transfer of formate to 5-phospho-ribosyl-glycinamide (GAR), producing 5-phospho-ribosyl-N-formylglycinamide (FGAR). Formate is provided by PurU via hydrolysis of 10-formyl-tetrahydrofolate. The sequence is that of Formate-dependent phosphoribosylglycinamide formyltransferase from Synechococcus sp. (strain CC9902).